Here is a 931-residue protein sequence, read N- to C-terminus: Neuropilin-2 (931 aa).

An N-terminal signal peptide occupies residues 1–20 (MDMFPLTWVFLALYFSGHEV). Residues 21–864 (RSQQDPPCGG…EKSWLYTLDP (844 aa)) lie on the Extracellular side of the membrane. 3 disulfides stabilise this stretch: C28/C55, C83/C105, and C149/C175. 2 consecutive CUB domains span residues 28–142 (CGGR…YEIF) and 149–267 (CSKN…YYLI). 2 N-linked (GlcNAc...) asparagine glycosylation sites follow: N152 and N157. Ca(2+)-binding residues include E197, D211, and D252. C208 and C230 form a disulfide bridge. 2 cysteine pairs are disulfide-bonded: C277-C427 and C434-C592. 2 consecutive F5/8 type C domains span residues 277 to 427 (CNVP…LFGC) and 434 to 592 (CSNM…VLGC). A compositionally biased stretch (polar residues) spans 298 to 310 (TFSDGRWTPQQSR). The disordered stretch occupies residues 298-317 (TFSDGRWTPQQSRLHGDDNG). The segment at 601–621 (VETLGPTVKSEETTTPYPMDE) is disordered. An N-linked (GlcNAc...) asparagine glycan is attached at N629. Positions 642–802 (SGFNCNFDFP…TDVPLENCME (161 aa)) constitute an MAM domain. The disordered stretch occupies residues 819–854 (THGGEGYEDEIDDEYEGDWSNSSSSTSGAGDPSSGK). Positions 824–835 (GYEDEIDDEYEG) are enriched in acidic residues. The span at 836 to 851 (DWSNSSSSTSGAGDPS) shows a compositional bias: low complexity. Residue N839 is glycosylated (N-linked (GlcNAc...) asparagine). Residues 865 to 889 (ILITIIAMSSLGVLLGATCAGLLLY) form a helical membrane-spanning segment. Residues 890–931 (CTCSYSGLSSRSCTTLENYNFELYDGLKHKVKINHQKCCSEA) lie on the Cytoplasmic side of the membrane.

This sequence belongs to the neuropilin family. In terms of assembly, heterodimer with NRP1. Binds PLXNB1. Expressed in developing CNS, PNS and in some nonneural tissues including limb buds, developing bones, muscles, intestinal epithelium, kidney, lung and submandibular gland.

The protein resides in the membrane. High affinity receptor for semaphorins 3C, 3F, VEGF-165 and VEGF-145 isoforms of VEGF, and the PLGF-2 isoform of PGF. The sequence is that of Neuropilin-2 (Nrp2) from Mus musculus (Mouse).